The primary structure comprises 212 residues: N-(5'-phosphoribosyl)anthranilate isomerase (212 aa).

The protein belongs to the TrpF family.

The enzyme catalyses N-(5-phospho-beta-D-ribosyl)anthranilate = 1-(2-carboxyphenylamino)-1-deoxy-D-ribulose 5-phosphate. The protein operates within amino-acid biosynthesis; L-tryptophan biosynthesis; L-tryptophan from chorismate: step 3/5. This is N-(5'-phosphoribosyl)anthranilate isomerase from Myxococcus xanthus (strain DK1622).